Consider the following 506-residue polypeptide: Glutamate--tRNA ligase (506 aa).

Positions 14 to 24 (PSPTGYLHIGG) match the 'HIGH' region motif. Positions 261-265 (KLSKR) match the 'KMSKS' region motif. Lysine 264 lines the ATP pocket.

The protein belongs to the class-I aminoacyl-tRNA synthetase family. Glutamate--tRNA ligase type 1 subfamily. Monomer.

The protein resides in the cytoplasm. It catalyses the reaction tRNA(Glu) + L-glutamate + ATP = L-glutamyl-tRNA(Glu) + AMP + diphosphate. Its function is as follows. Catalyzes the attachment of glutamate to tRNA(Glu) in a two-step reaction: glutamate is first activated by ATP to form Glu-AMP and then transferred to the acceptor end of tRNA(Glu). This chain is Glutamate--tRNA ligase, found in Roseiflexus sp. (strain RS-1).